The primary structure comprises 500 residues: NAD(P)H-quinone oxidoreductase chain 4, chloroplastic (500 aa).

The next 12 membrane-spanning stretches (helical) occupy residues 4–24 (FPWLTAILLLPISAGSSILFI), 37–57 (ICICLLELLLMTYVFYYNFQL), 80–100 (LGIDGLSIGPILLTGFITTLA), 134–154 (LLLFFIMWELELIPVYLLLSM), 167–187 (FILYTAGGSIFLLIGVLGMGL), 208–228 (GLEILFYFGFLIAYAAKPPII), 242–262 (HYSTCMLLAGILLKMGAYGLV), 272–292 (AHSLFSPWLVIVGTLQIIYAA), 330–350 (GAILQIISHGFIGAALFFLAG), 386–406 (LASPGMSGFVAEFLVFLGIIT), 416–436 (ILITVVMAIGMILTPIYLLSM), and 462–482 (IFILISILLPVMGIGIYPDFV).

The protein belongs to the complex I subunit 4 family.

It is found in the plastid. The protein localises to the chloroplast thylakoid membrane. It catalyses the reaction a plastoquinone + NADH + (n+1) H(+)(in) = a plastoquinol + NAD(+) + n H(+)(out). The enzyme catalyses a plastoquinone + NADPH + (n+1) H(+)(in) = a plastoquinol + NADP(+) + n H(+)(out). The protein is NAD(P)H-quinone oxidoreductase chain 4, chloroplastic of Amborella trichopoda.